We begin with the raw amino-acid sequence, 425 residues long: Formyl-CoA:oxalate CoA-transferase (425 aa).

CoA contacts are provided by residues 17 to 18 (QS), Arg38, 72 to 75 (LDTK), 96 to 98 (NFG), Arg104, and 136 to 139 (KVYE). Residue Asp168 is the Nucleophile of the active site. Residue 247 to 249 (GGQ) participates in substrate binding.

The protein belongs to the CoA-transferase III family. Frc subfamily. Homodimer.

It carries out the reaction formyl-CoA + oxalate = oxalyl-CoA + formate. It functions in the pathway metabolic intermediate degradation; oxalate degradation; CO(2) and formate from oxalate: step 1/2. Functionally, involved in the catabolism of oxalate and in the adapatation to low pH via the induction of the oxalate-dependent acid tolerance response (ATR). Catalyzes the transfer of the CoA moiety from formyl-CoA to oxalate. This is Formyl-CoA:oxalate CoA-transferase from Rhodopseudomonas palustris (strain TIE-1).